Consider the following 117-residue polypeptide: Prefoldin subunit beta (117 aa).

It belongs to the prefoldin subunit beta family. As to quaternary structure, heterohexamer of two alpha and four beta subunits.

Its subcellular location is the cytoplasm. In terms of biological role, molecular chaperone capable of stabilizing a range of proteins. Seems to fulfill an ATP-independent, HSP70-like function in archaeal de novo protein folding. In Methanococcoides burtonii (strain DSM 6242 / NBRC 107633 / OCM 468 / ACE-M), this protein is Prefoldin subunit beta.